The primary structure comprises 156 residues: Small ribosomal subunit protein uS7 (156 aa).

It belongs to the universal ribosomal protein uS7 family. As to quaternary structure, part of the 30S ribosomal subunit. Contacts proteins S9 and S11.

Its function is as follows. One of the primary rRNA binding proteins, it binds directly to 16S rRNA where it nucleates assembly of the head domain of the 30S subunit. Is located at the subunit interface close to the decoding center, probably blocks exit of the E-site tRNA. In Shewanella sp. (strain MR-7), this protein is Small ribosomal subunit protein uS7.